The chain runs to 114 residues: Large ribosomal subunit protein bL17 (114 aa).

The protein belongs to the bacterial ribosomal protein bL17 family. As to quaternary structure, part of the 50S ribosomal subunit. Contacts protein L32.

This Elusimicrobium minutum (strain Pei191) protein is Large ribosomal subunit protein bL17.